The chain runs to 901 residues: Nuclear factor of activated T-cells, cytoplasmic 4 (901 aa).

Over residues 1–11 the composition is skewed to acidic residues; that stretch reads MGAASCEDEEL. 2 disordered regions span residues 1-180 and 203-361; these read MGAA…SSWS and NEAA…TEDS. Positions 61-81 are enriched in pro residues; sequence IPRPPPPRPGMHSPPPRPAPS. The span at 96–109 shows a compositional bias: gly residues; that stretch reads GGPGGTAGGTGGGR. The interval 114 to 119 is calcineurin-binding; that stretch reads PSIRIT. Residues 114 to 123 show a composition bias toward low complexity; sequence PSIRITSISP. Residues 151–165 show a composition bias toward gly residues; it reads GFGGYREAGGQGGGA. A compositionally biased stretch (low complexity) spans 166–180; that stretch reads FFSPSPGSSSLSSWS. Phosphoserine is present on residues Ser-168, Ser-170, Ser-213, and Ser-217. One copy of the SP 1 repeat lies at 213 to 229; it reads SPLPSPRASPRPWTPED. The 2 approximate SP repeats stretch occupies residues 213–293; sequence SPLPSPRASP…LSRRGSLGEE (81 aa). Pro residues-rich tracts occupy residues 215-227 and 254-263; these read LPSPRASPRPWTP and GPIPASPRPA. A Nuclear localization signal motif is present at residues 268–270; sequence KRR. The segment covering 272-288 has biased composition (low complexity); that stretch reads SSSGTPSSASPALSRRG. An SP 2; approximate repeat occupies 277–293; the sequence is PSSASPALSRRGSLGEE. Ser-289, Ser-334, and Ser-344 each carry phosphoserine. Positions 401 to 582 constitute an RHD domain; that stretch reads SALPPLDWPL…VPIECSQRSA (182 aa). Residues 430–437 mediate DNA binding; sequence RAHYETEG. Residues 586–683 enclose the IPT/TIG domain; that stretch reads PQVEAYSPSA…KRSPTQSFKF (98 aa). The short motif at 672–674 is the Nuclear localization signal element; sequence RRK. Residue Lys-689 forms a Glycyl lysine isopeptide (Lys-Gly) (interchain with G-Cter in SUMO2) linkage. 2 disordered regions span residues 697 to 721 and 791 to 868; these read SLRGFPSTSGPPFGPDMDFSPPRPP and QYGG…GFRD. Residues 805-822 are compositionally biased toward pro residues; it reads FSPPAPFRPPLPSSPPLE.

Member of the multicomponent NFATC transcription complex that consists of at least two components, a pre-existing cytoplasmic component NFATC2 and an inducible nuclear component NFATC1. Other NFAT proteins, such as NFATC4, NFATC3, or members of the activating protein-1 (AP-1) family and MAF can also bind the complex. NFAT proteins can bind DNA as monomers or dimers. Component of a promoter-binding complex composed of STAT3, NFATC3 and NFATC4; complex formation is enhanced by calcineurin. Interacts with CREBBP; this interaction potentiates transcription activation. Interacts with MAPK8/JNK1 and MAPK9/JNK2. Interacts with GATA4 (via the second Zn finger). Interacts (via N-terminus) with IRAK1 (via C-terminus). Interacts with RPS6KA3. Interacts with HOMER1, HOMER2 and HOMER3; this interaction competes with calcineurin/PPP3CA-binding and hence prevents NFATC4 dephosphorylation and activation. Interacts with ESR1 and ESR2; this interaction decreases NFATC4 transcriptional activity. Interacts with MTOR and MAPK7/ERK5. Interacts with TRIM17; this interaction prevents NFATC3 nuclear localization. Interacts with TCF25 (via C-terminus); the interaction leads to suppression of NFATC4 transcription factor activity and is reduced following stimulation with angiotensin-2. In terms of processing, phosphorylated by NFATC-kinases; dephosphorylated by calcineurin/PPP3CA. Phosphorylated on Ser-168 and Ser-170 by MTOR, IRAK1, MAPK7/ERK5 and MAPK14/p38, on Ser-213 and Ser-217 by MAPK8 and MAPK9, and on Ser-289 and Ser-344 by RPS6KA3. Phosphorylated by GSK3B; this phosphorylation markedly increases NFATC4 ubiquitination. Phosphorylation by MAPK8/JNK1, MAPK9/JNK2 and RPS6KA3 may stimulate NFATC4 transcriptional activity. Phosphorylation at Ser-168 and Ser-170 is stimulated by UV irradiation. Post-translationally, ubiquitinated, leading to degradation by the proteasome. Ubiquitination may be stimulated by GSK3B-dependent phosphorylation. Polyubiquitin linkage mainly occurs through 'Lys-48'. As to expression, expressed in heart (at protein level).

The protein resides in the cytoplasm. It is found in the nucleus. Its function is as follows. Ca(2+)-regulated transcription factor that is involved in several processes, including the development and function of the immune, cardiovascular, musculoskeletal, and nervous systems. Involved in T-cell activation, stimulating the transcription of cytokine genes, including that of IL2 and IL4. Along with NFATC3, involved in embryonic heart development. Following JAK/STAT signaling activation and as part of a complex with NFATC3 and STAT3, binds to the alpha-beta E4 promoter region of CRYAB and activates transcription in cardiomyocytes. Involved in mitochondrial energy metabolism required for cardiac morphogenesis and function. Transactivates many genes involved in heart physiology. Along with GATA4, binds to and activates NPPB/BNP promoter. Activates NPPA/ANP/ANF and MYH7/beta-MHC transcription. Binds to and transactivates AGTR2 gene promoter. Involved in the regulation of adult hippocampal neurogenesis. Involved in BDNF-driven pro-survival signaling in hippocampal adult-born neurons. Involved in the formation of long-term spatial memory and long-term potentiation. In cochlear nucleus neurons, may play a role in deafferentation-induced apoptosis during a developmental critical period when auditory neurons depend on afferent input for survival. Binds to and activates the BACE1/Beta-secretase 1 promoter, hence may regulate the proteolytic processing of the amyloid precursor protein (APP). Plays a role in adipocyte differentiation. May be involved in myoblast differentiation into myotubes. Binds the consensus DNA sequence 5'-GGAAAAT-3'. In the presence of CREBBP, activates TNF transcription. Binds to PPARG gene promoter and regulates its activity. Binds to PPARG and REG3G gene promoters. The sequence is that of Nuclear factor of activated T-cells, cytoplasmic 4 (Nfatc4) from Rattus norvegicus (Rat).